Consider the following 344-residue polypeptide: Aurora kinase B (344 aa).

The tract at residues 1–22 is disordered; sequence MAQKENSYPWPYGRQTAPSGLS. T35 is modified (phosphothreonine). S62 is subject to Phosphoserine. T64 bears the Phosphothreonine mark. Positions 77 to 327 constitute a Protein kinase domain; sequence FEIGRPLGKG…LAQVSAHPWV (251 aa). ATP contacts are provided by residues 83–91 and K106; that span reads LGKGKFGNV. D200 acts as the Proton acceptor in catalysis. K215 is subject to N6-acetyllysine. The residue at position 227 (S227) is a Phosphoserine. T232 carries the post-translational modification Phosphothreonine; by autocatalysis.

Belongs to the protein kinase superfamily. Ser/Thr protein kinase family. Aurora subfamily. In terms of assembly, component of the chromosomal passenger complex (CPC) composed of at least BIRC5/survivin, CDCA8/borealin, INCENP, AURKB or AURKC; predominantly independent AURKB- and AURKC-containing complexes exist. Associates with RACGAP1 during M phase. Interacts with SPDYC; this interaction may be required for proper localization of active, Thr-232-phosphorylated AURKB form during prometaphase and metaphase. Interacts with p53/TP53. Interacts (via the middle kinase domain) with NOC2L (via the N- and C-terminus domains). Interacts with CDCA1. Interacts with EVI5. Interacts with JTB. Interacts with NDC80. Interacts with PSMA3. Interacts with RNF2/RING1B. Interacts with SEPTIN1. Interacts with SIRT2. Interacts with TACC1. Interacts with TTC28. In terms of processing, the phosphorylation of Thr-232 requires the binding to INCENP and occurs by means of an autophosphorylation mechanism. Thr-232 phosphorylation is indispensable for the AURKB kinase activity. Acetylated at Lys-215 by KAT5 at kinetochores, increasing AURKB activity and promoting accurate chromosome segregation in mitosis. Post-translationally, ubiquitinated by different BCR (BTB-CUL3-RBX1) E3 ubiquitin ligase complexes. Ubiquitinated by the BCR(KLHL9-KLHL13) E3 ubiquitin ligase complex, ubiquitination leads to removal from mitotic chromosomes and is required for cytokinesis. During anaphase, the BCR(KLHL21) E3 ubiquitin ligase complex recruits the CPC complex from chromosomes to the spindle midzone and mediates the ubiquitination of AURKB. Ubiquitination of AURKB by BCR(KLHL21) E3 ubiquitin ligase complex may not lead to its degradation by the proteasome. Deubiquitinated by USP35; inhibiting CDH1-mediated degradation of AURKB. High level expression seen in the thymus. It is also expressed in the spleen, lung, testis, colon, placenta and fetal liver. Expressed during S and G2/M phase and expression is up-regulated in cancer cells during M phase. As to expression, not expressed in normal liver, high expression in metastatic liver.

It localises to the nucleus. It is found in the chromosome. Its subcellular location is the centromere. The protein localises to the kinetochore. The protein resides in the cytoplasm. It localises to the cytoskeleton. It is found in the spindle. Its subcellular location is the midbody. It catalyses the reaction L-seryl-[protein] + ATP = O-phospho-L-seryl-[protein] + ADP + H(+). The enzyme catalyses L-threonyl-[protein] + ATP = O-phospho-L-threonyl-[protein] + ADP + H(+). With respect to regulation, activity is greatly increased when AURKB is within the CPC complex. In particular, AURKB-phosphorylated INCENP acts as an activator of AURKB. Positive feedback between HASPIN and AURKB contributes to CPC localization. Inhibited by ZM447439. In terms of biological role, serine/threonine-protein kinase component of the chromosomal passenger complex (CPC), a complex that acts as a key regulator of mitosis. The CPC complex has essential functions at the centromere in ensuring correct chromosome alignment and segregation and is required for chromatin-induced microtubule stabilization and spindle assembly. Involved in the bipolar attachment of spindle microtubules to kinetochores and is a key regulator for the onset of cytokinesis during mitosis. Required for central/midzone spindle assembly and cleavage furrow formation. Key component of the cytokinesis checkpoint, a process required to delay abscission to prevent both premature resolution of intercellular chromosome bridges and accumulation of DNA damage: phosphorylates CHMP4C, leading to retain abscission-competent VPS4 (VPS4A and/or VPS4B) at the midbody ring until abscission checkpoint signaling is terminated at late cytokinesis. AURKB phosphorylates the CPC complex subunits BIRC5/survivin, CDCA8/borealin and INCENP. Phosphorylation of INCENP leads to increased AURKB activity. Other known AURKB substrates involved in centromeric functions and mitosis are CENPA, DES/desmin, GPAF, KIF2C, NSUN2, RACGAP1, SEPTIN1, VIM/vimentin, HASPIN, and histone H3. A positive feedback loop involving HASPIN and AURKB contributes to localization of CPC to centromeres. Phosphorylation of VIM controls vimentin filament segregation in cytokinetic process, whereas histone H3 is phosphorylated at 'Ser-10' and 'Ser-28' during mitosis (H3S10ph and H3S28ph, respectively). AURKB is also required for kinetochore localization of BUB1 and SGO1. Phosphorylation of p53/TP53 negatively regulates its transcriptional activity. Key regulator of active promoters in resting B- and T-lymphocytes: acts by mediating phosphorylation of H3S28ph at active promoters in resting B-cells, inhibiting RNF2/RING1B-mediated ubiquitination of histone H2A and enhancing binding and activity of the USP16 deubiquitinase at transcribed genes. Acts as an inhibitor of CGAS during mitosis: catalyzes phosphorylation of the N-terminus of CGAS during the G2-M transition, blocking CGAS liquid phase separation and activation, and thereby preventing CGAS-induced autoimmunity. Phosphorylates KRT5 during anaphase and telophase. Phosphorylates ATXN10 which promotes phosphorylation of ATXN10 by PLK1 and may play a role in the regulation of cytokinesis and stimulating the proteasomal degradation of ATXN10. This is Aurora kinase B (AURKB) from Homo sapiens (Human).